A 180-amino-acid polypeptide reads, in one-letter code: Large ribosomal subunit protein uL18m (180 aa).

It belongs to the universal ribosomal protein uL18 family. As to quaternary structure, component of the mitochondrial ribosome large subunit (39S) which comprises a 16S rRNA and about 50 distinct proteins.

It is found in the mitochondrion. In terms of biological role, together with thiosulfate sulfurtransferase (TST), acts as a mitochondrial import factor for the cytosolic 5S rRNA. The precursor form shows RNA chaperone activity; is able to fold the 5S rRNA into an import-competent conformation that is recognized by rhodanese (TST). Both the cytoplasmic and mitochondrial forms are able to bind to the helix IV-loop D in the gamma domain of the 5S rRNA. The sequence is that of Large ribosomal subunit protein uL18m (MRPL18) from Bos taurus (Bovine).